A 224-amino-acid chain; its full sequence is MYQNSEAGSLGRVVKGSWSDEEDDLLRKCIQKYGEGNWKRVPERAGLNRCRKSCRWRWLNYLKPSIKRGHFNEDEVKFIIQQHKLLGNRWSLIAAKLPGRTINDVKNYCNTHLYKKHSIENIPAPATNTMTHNTSSCVERPESSAAIKEPTWWENILVELQREEKEGKSQNCSGLDFEQDNLGQQDPNINDGMDQWLNSLREVPNLSYQWEENLLDFDVVNLWA.

2 consecutive HTH myb-type domains span residues Leu-10 to Ile-66 and Lys-67 to His-117. 2 consecutive DNA-binding regions (H-T-H motif) follow at residues Trp-38–Leu-62 and Trp-90–Leu-113.

The protein resides in the nucleus. Activates DODA1 and CYP76AD1 in the betalain red pigment pathway. In Beta vulgaris (Sugar beet), this protein is Transcription factor MYB1.